We begin with the raw amino-acid sequence, 663 residues long: Endopolyphosphatase (663 aa).

Residues 1–14 (MAVNEKDVGRKSRV) lie on the Cytoplasmic side of the membrane. A helical; Signal-anchor for type II membrane protein membrane pass occupies residues 15–35 (SVVLWVFIALGTLFLCKNAFT). Residues 36 to 663 (FSSESIHGLK…ISTGYEDERN (628 aa)) are Vacuolar-facing. N-linked (GlcNAc...) asparagine glycosylation is found at asparagine 487 and asparagine 526. The interval 534-564 (SAEQNKKKKKKNGKPDKSIPRKKPDELPAGP) is disordered. Residues 546-559 (GKPDKSIPRKKPDE) are compositionally biased toward basic and acidic residues.

Belongs to the endopolyphosphatase PPN1 family. Requires a divalent metal cation as cofactor. In terms of processing, processing by proteases in the vacuole may be required for activation.

The protein localises to the vacuole membrane. The catalysed reaction is [phosphate](n+1) + n H2O = (n+1) phosphate + n H(+). Its function is as follows. Catalyzes the hydrolysis of inorganic polyphosphate (polyP) chains of many hundreds of phosphate residues into shorter lengths. The sequence is that of Endopolyphosphatase (PPN1) from Candida glabrata (strain ATCC 2001 / BCRC 20586 / JCM 3761 / NBRC 0622 / NRRL Y-65 / CBS 138) (Yeast).